We begin with the raw amino-acid sequence, 1841 residues long: Sodium channel protein type 4 subunit alpha (1841 aa).

Residues 1–131 (MASSSLPTLV…RVAIKVLIHA (131 aa)) are Cytoplasmic-facing. Residues 32 to 60 (AMEEEARLQRNKQMEIEEPERKPRSDLEA) are compositionally biased toward basic and acidic residues. The tract at residues 32 to 63 (AMEEEARLQRNKQMEIEEPERKPRSDLEAGKN) is disordered. The stretch at 113 to 448 (MLSPFSIVRR…VVAMAYAEQN (336 aa)) is one I repeat. Residues 132–150 (LFSMFIMITILTNCVFMTM) form a helical membrane-spanning segment. Topologically, residues 151–157 (SNPPSWS) are extracellular. A helical membrane pass occupies residues 158-178 (KDVEYTFTGIYTFESLIKMLA). Residues 179–192 (RGFCIDDFTFLRDP) are Cytoplasmic-facing. The chain crosses the membrane as a helical span at residues 193–210 (WNWLDFSVITMAYVTEFV). Residues 211–216 (DLGNIS) are Extracellular-facing. N-linked (GlcNAc...) asparagine glycosylation is present at asparagine 214. A helical transmembrane segment spans residues 217–233 (ALRTFRVLRALKTITVI). Topologically, residues 234-252 (PGLKTIVGALIQSVKKLSD) are cytoplasmic. A helical membrane pass occupies residues 253–272 (VMILTVFCLSVFALVGLQLF). Topologically, residues 273–385 (MGNLRQKCVR…PNYGYTSYDT (113 aa)) are extracellular. Cysteine 280 and cysteine 354 form a disulfide bridge. Asparagine 288, asparagine 291, asparagine 297, asparagine 303, asparagine 315, asparagine 327, and asparagine 356 each carry an N-linked (GlcNAc...) asparagine glycan. Cysteine 363 and cysteine 369 are oxidised to a cystine. Residues 386 to 410 (FSWAFLALFRLMTQDYWENLFQLTL) constitute an intramembrane region (pore-forming). Over 411-417 (RAAGKTY) the chain is Extracellular. The chain crosses the membrane as a helical span at residues 418–438 (MIFFVVIIFLGSFYLINLILA). The Cytoplasmic segment spans residues 439-572 (VVAMAYAEQN…HIILLIVMDP (134 aa)). Residues 484–522 (ALEGGEEADGDPTHSKDCNGSLDTSGEKGPPRPSCSAES) form a disordered region. An II repeat occupies 554–826 (CCAPWVKFKH…QIAIGRIKWG (273 aa)). The helical transmembrane segment at 573–591 (FVDLGITICIVLNTLFMAM) threads the bilayer. The Extracellular segment spans residues 592-602 (EHYPMTEHFDN). Residues 603–622 (VLSVGNLVFTGIFTAEMVLK) form a helical membrane-spanning segment. Over 623–636 (LIAMDPYEYFQQGW) the chain is Cytoplasmic. Residues 637–656 (NIFDSFIVTLSLVELGLANV) form a helical membrane-spanning segment. Topologically, residues 657–658 (QG) are extracellular. The helical transmembrane segment at 659–676 (LSVLRSFRLLRVFKLAKS) threads the bilayer. The Cytoplasmic portion of the chain corresponds to 677–692 (WPTLNMLIKIIGNSVG). The helical transmembrane segment at 693 to 711 (ALGNLTLVLAIIVFIFAVV) threads the bilayer. The Extracellular segment spans residues 712–740 (GMQLFGKSYKECVCKIASDCSLPRWHMHD). A disulfide bridge connects residues cysteine 725 and cysteine 731. An intramembrane region (pore-forming) is located at residues 741-761 (FFHSFLIVFRILCGEWIETMW). The Extracellular segment spans residues 762 to 772 (DCMEVAGQAMC). Cysteine 763 and cysteine 772 form a disulfide bridge. The chain crosses the membrane as a helical span at residues 773-791 (LTVFLMVMVIGNLVVLNLF). Over 792–1026 (LALLLSSFSA…ACFKIVEHNW (235 aa)) the chain is Cytoplasmic. Disordered stretches follow at residues 854–896 (EPGG…LTDG) and 925–983 (SDLE…EGEL). Over residues 867-887 (EDEKKEPPPEDGNKELKDNHI) the composition is skewed to basic and acidic residues. 2 stretches are compositionally biased toward acidic residues: residues 925–941 (SDLEMPTEEETDTFSEP) and 969–983 (EDPEEQAEENPEGEL). An III repeat occupies 1007-1320 (RGKMWWTLRR…KKYYNAMKKL (314 aa)). Residues 1027–1044 (FETFIVFMILLSSGALAF) form a helical membrane-spanning segment. The Extracellular segment spans residues 1045 to 1057 (EDIYIEQRRVIRT). The chain crosses the membrane as a helical span at residues 1058 to 1076 (ILEYADKVFTYIFILEMLL). Topologically, residues 1077 to 1090 (KWVAYGFKVYFTNA) are cytoplasmic. The chain crosses the membrane as a helical span at residues 1091–1109 (WCWLDFLIVDVSIISLVAN). Over 1110–1117 (WLGYSELG) the chain is Extracellular. Residues 1118 to 1136 (PIKSLRTLRALRPLRALSR) traverse the membrane as a helical segment. The Cytoplasmic segment spans residues 1137–1153 (FEGMRVVVNALLGAIPS). A helical membrane pass occupies residues 1154–1173 (IMNVLLVCLIFWLIFSIMGV). Topologically, residues 1174–1224 (NLFAGKFYYCINTTTSERFDISVVNNKSECESLMYTGQVRWMNVKVNYDNV) are extracellular. A disulfide bridge connects residues cysteine 1183 and cysteine 1203. Residues asparagine 1185 and asparagine 1199 are each glycosylated (N-linked (GlcNAc...) asparagine). The segment at residues 1225–1246 (GLGYLSLLQVATFKGWMDIMYA) is an intramembrane region (pore-forming). The Extracellular portion of the chain corresponds to 1247–1263 (AVDSREKEEQPDYEVNL). The helical transmembrane segment at 1264-1285 (YMYLYFVIFIIFGSFFTLNLFI) threads the bilayer. Residues 1286–1348 (GVIIDNFNQQ…MVYDFVTKQV (63 aa)) are Cytoplasmic-facing. Residues 1304–1306 (IFM) form an important for rapid channel inactivation region. The IV repeat unit spans residues 1329 to 1627 (IPRPQNKIQG…WEKFDPDATQ (299 aa)). The chain crosses the membrane as a helical span at residues 1349–1366 (FDISIMILICLNMVTMMV). Topologically, residues 1367 to 1377 (ETDDQSQLKVD) are extracellular. Residues 1378-1396 (ILYNINMVFIIVFTGECVL) form a helical membrane-spanning segment. Residues 1397 to 1408 (KMFALRHYYFTI) are Cytoplasmic-facing. A helical membrane pass occupies residues 1409 to 1426 (GWNIFDFVVVILSIVGLA). Residues 1427-1439 (LSDLIQKYFVSPT) are Extracellular-facing. The helical transmembrane segment at 1440-1456 (LFRVIRLARIGRVLRLI) threads the bilayer. Residues 1457 to 1475 (RGAKGIRTLLFALMMSLPA) are Cytoplasmic-facing. Residues 1476–1493 (LFNIGLLLFLVMFIYSIF) traverse the membrane as a helical segment. The Extracellular portion of the chain corresponds to 1494–1515 (GMSNFAYVKKESGIDDMFNFET). An intramembrane region (pore-forming) is located at residues 1516–1538 (FGNSIICLFEITTSAGWDGLLNP). At 1539 to 1568 (ILNSGPPDCDPTLENPGTNIKGDCGNPSIG) the chain is on the extracellular side. A disulfide bond links cysteine 1547 and cysteine 1562. A helical membrane pass occupies residues 1569–1591 (ICFFCSYIIISFLIVVNMYIAII). The Cytoplasmic portion of the chain corresponds to 1592-1841 (LENFNVATEE…VRPGVKESLV (250 aa)). Positions 1721–1750 (EEVCAIKIQRAYRRHLLQRSVKQASYMYRH) constitute an IQ domain. The span at 1776–1794 (SEKEDNGVQSQGEKEKDST) shows a compositional bias: basic and acidic residues. A disordered region spans residues 1776 to 1841 (SEKEDNGVQS…VRPGVKESLV (66 aa)). Positions 1801–1812 (TEVTAPSSSDTA) are enriched in polar residues. Residues 1814 to 1826 (TPPPPSPPPPSSP) show a composition bias toward pro residues.

Belongs to the sodium channel (TC 1.A.1.10) family. Nav1.4/SCN4A subfamily. As to quaternary structure, the Nav1.4 voltage-gated sodium channel consists of an ion-conducting alpha subunit SCN4A which is functional on its own and a regulatory beta subunit SCN1B. SCN1B strongly enhances the presence of SCN4A at the cell surface. SCN1B is also required for rapid channel inactivation and recovery after inactivation. It prevents the decrease of channel activity in response to repetitive, high-frequency depolarizations. Interacts with the syntrophins SNTA1, SNTB1 and SNTB2 (via PDZ domain); probably links SCN4A to the actin cytoskeleton and the extracellular matrix via the dystrophin-associated protein complex and regulates its localization in muscle cells. Interacts with TMEM233; probable regulator of the channel. Detected in quadriceps muscle (at protein level). Detected in hind-limb skeletal muscles, but not in heart or brain. Detected at low levels in the myocardium. According to Pubme=26427606 detected also in brain.

The protein resides in the cell membrane. The catalysed reaction is Na(+)(in) = Na(+)(out). With respect to regulation, the channel is inhibited by tetrodotoxin. Its function is as follows. Pore-forming subunit of Nav1.4, a voltage-gated sodium (Nav) channel that directly mediates the depolarizing phase of action potentials in excitable membranes. Navs, also called VGSCs (voltage-gated sodium channels) or VDSCs (voltage-dependent sodium channels), operate by switching between closed and open conformations depending on the voltage difference across the membrane. In the open conformation they allow Na(+) ions to selectively pass through the pore, along their electrochemical gradient. The influx of Na+ ions provokes membrane depolarization, initiating the propagation of electrical signals throughout cells and tissues. Highly expressed in skeletal muscles, Nav1.4 generates the action potential crucial for muscle contraction. In Mus musculus (Mouse), this protein is Sodium channel protein type 4 subunit alpha.